A 371-amino-acid chain; its full sequence is Chorismate synthase (371 aa).

Residues R48 and R54 each coordinate NADP(+). FMN contacts are provided by residues 131-133, 245-246, G290, 305-309, and R331; these read RSS, NA, and KPTSS.

The protein belongs to the chorismate synthase family. Homotetramer. It depends on FMNH2 as a cofactor.

The enzyme catalyses 5-O-(1-carboxyvinyl)-3-phosphoshikimate = chorismate + phosphate. Its pathway is metabolic intermediate biosynthesis; chorismate biosynthesis; chorismate from D-erythrose 4-phosphate and phosphoenolpyruvate: step 7/7. Its function is as follows. Catalyzes the anti-1,4-elimination of the C-3 phosphate and the C-6 proR hydrogen from 5-enolpyruvylshikimate-3-phosphate (EPSP) to yield chorismate, which is the branch point compound that serves as the starting substrate for the three terminal pathways of aromatic amino acid biosynthesis. This reaction introduces a second double bond into the aromatic ring system. The chain is Chorismate synthase from Mesorhizobium japonicum (strain LMG 29417 / CECT 9101 / MAFF 303099) (Mesorhizobium loti (strain MAFF 303099)).